We begin with the raw amino-acid sequence, 425 residues long: Argininosuccinate synthase (425 aa).

Residues 7–15 (AYSGGLDTS) and Ala-33 each bind ATP. Tyr-84 lines the L-citrulline pocket. Position 114 (Gly-114) interacts with ATP. L-aspartate is bound by residues Thr-116, Asn-120, and Asp-121. Residue Asn-120 coordinates L-citrulline. L-citrulline contacts are provided by Arg-124, Ser-177, Ser-186, Glu-267, and Tyr-279.

This sequence belongs to the argininosuccinate synthase family. Type 1 subfamily. Homotetramer.

The protein localises to the cytoplasm. It catalyses the reaction L-citrulline + L-aspartate + ATP = 2-(N(omega)-L-arginino)succinate + AMP + diphosphate + H(+). Its pathway is amino-acid biosynthesis; L-arginine biosynthesis; L-arginine from L-ornithine and carbamoyl phosphate: step 2/3. This is Argininosuccinate synthase from Pseudothermotoga lettingae (strain ATCC BAA-301 / DSM 14385 / NBRC 107922 / TMO) (Thermotoga lettingae).